Here is a 168-residue protein sequence, read N- to C-terminus: tRNA (cytidine(56)-2'-O)-methyltransferase (168 aa).

S-adenosyl-L-methionine contacts are provided by residues Leu-79 and 104–108 (GAEKV).

This sequence belongs to the aTrm56 family. In terms of assembly, homodimer.

The protein resides in the cytoplasm. It catalyses the reaction cytidine(56) in tRNA + S-adenosyl-L-methionine = 2'-O-methylcytidine(56) in tRNA + S-adenosyl-L-homocysteine + H(+). Functionally, specifically catalyzes the AdoMet-dependent 2'-O-ribose methylation of cytidine at position 56 in tRNAs. In Archaeoglobus fulgidus (strain ATCC 49558 / DSM 4304 / JCM 9628 / NBRC 100126 / VC-16), this protein is tRNA (cytidine(56)-2'-O)-methyltransferase.